Here is a 390-residue protein sequence, read N- to C-terminus: Dual-specificity RNA methyltransferase RlmN (390 aa).

Residue glutamate 111 is the Proton acceptor of the active site. Residues glutamate 117–aspartate 356 form the Radical SAM core domain. Cysteine 124 and cysteine 361 are oxidised to a cystine. [4Fe-4S] cluster is bound by residues cysteine 131, cysteine 135, and cysteine 138. S-adenosyl-L-methionine is bound by residues glycine 185 to glutamate 186, serine 217, serine 239 to histidine 241, and asparagine 318. Catalysis depends on cysteine 361, which acts as the S-methylcysteine intermediate.

Belongs to the radical SAM superfamily. RlmN family. The cofactor is [4Fe-4S] cluster.

The protein resides in the cytoplasm. It carries out the reaction adenosine(2503) in 23S rRNA + 2 reduced [2Fe-2S]-[ferredoxin] + 2 S-adenosyl-L-methionine = 2-methyladenosine(2503) in 23S rRNA + 5'-deoxyadenosine + L-methionine + 2 oxidized [2Fe-2S]-[ferredoxin] + S-adenosyl-L-homocysteine. It catalyses the reaction adenosine(37) in tRNA + 2 reduced [2Fe-2S]-[ferredoxin] + 2 S-adenosyl-L-methionine = 2-methyladenosine(37) in tRNA + 5'-deoxyadenosine + L-methionine + 2 oxidized [2Fe-2S]-[ferredoxin] + S-adenosyl-L-homocysteine. Specifically methylates position 2 of adenine 2503 in 23S rRNA and position 2 of adenine 37 in tRNAs. m2A2503 modification seems to play a crucial role in the proofreading step occurring at the peptidyl transferase center and thus would serve to optimize ribosomal fidelity. This is Dual-specificity RNA methyltransferase RlmN from Edwardsiella ictaluri (strain 93-146).